The sequence spans 301 residues: HTH-type transcriptional regulator AbaB (301 aa).

The 58-residue stretch at 1-58 (MDLALLRTFVTVHRAGSFTRAAALLGLSQPAVTSQIRTLERQLGRPLFLRQARGVTPT) folds into the HTH lysR-type domain. The segment at residues 18-37 (FTRAAALLGLSQPAVTSQIR) is a DNA-binding region (H-T-H motif).

This sequence belongs to the LysR transcriptional regulatory family.

Putative regulator that may be involved in stimulating antibiotic production in S.antibioticus. The chain is HTH-type transcriptional regulator AbaB from Streptomyces antibioticus.